Consider the following 353-residue polypeptide: Small ribosomal subunit protein uS2 (353 aa).

The segment at 256–353 (DTDEQSSAAN…TPAESTDEQA (98 aa)) is disordered. 2 stretches are compositionally biased toward low complexity: residues 263-311 (AANT…AEAP) and 321-339 (ESAT…TPAE). Over residues 340-353 (AEAETPAESTDEQA) the composition is skewed to acidic residues.

Belongs to the universal ribosomal protein uS2 family.

This is Small ribosomal subunit protein uS2 from Beutenbergia cavernae (strain ATCC BAA-8 / DSM 12333 / CCUG 43141 / JCM 11478 / NBRC 16432 / NCIMB 13614 / HKI 0122).